Here is a 116-residue protein sequence, read N- to C-terminus: Flagellar transcriptional regulator FlhD (116 aa).

It belongs to the FlhD family. As to quaternary structure, homodimer; disulfide-linked. Forms a heterohexamer composed of two FlhC and four FlhD subunits. Each FlhC binds a FlhD dimer, forming a heterotrimer, and a hexamer assembles by dimerization of two heterotrimers.

The protein localises to the cytoplasm. Functions in complex with FlhC as a master transcriptional regulator that regulates transcription of several flagellar and non-flagellar operons by binding to their promoter region. Activates expression of class 2 flagellar genes, including fliA, which is a flagellum-specific sigma factor that turns on the class 3 genes. Also regulates genes whose products function in a variety of physiological pathways. In Pantoea ananatis (strain LMG 20103), this protein is Flagellar transcriptional regulator FlhD.